The following is a 1393-amino-acid chain: DNA-directed RNA polymerase subunit beta' (1393 aa).

Zn(2+) contacts are provided by cysteine 70, cysteine 72, cysteine 85, and cysteine 88. 3 residues coordinate Mg(2+): aspartate 461, aspartate 463, and aspartate 465. The Zn(2+) site is built by cysteine 815, cysteine 889, cysteine 896, and cysteine 899.

This sequence belongs to the RNA polymerase beta' chain family. The RNAP catalytic core consists of 2 alpha, 1 beta, 1 beta' and 1 omega subunit. When a sigma factor is associated with the core the holoenzyme is formed, which can initiate transcription. It depends on Mg(2+) as a cofactor. The cofactor is Zn(2+).

The enzyme catalyses RNA(n) + a ribonucleoside 5'-triphosphate = RNA(n+1) + diphosphate. DNA-dependent RNA polymerase catalyzes the transcription of DNA into RNA using the four ribonucleoside triphosphates as substrates. The protein is DNA-directed RNA polymerase subunit beta' of Vesicomyosocius okutanii subsp. Calyptogena okutanii (strain HA).